The following is a 244-amino-acid chain: MRNILLTIEYDGTNYFGWQKQPNKKTVQGVIEDAIKKITGEDVNLVGSGRTDRGVHALGQKANFKTESKIPTEKFPLALNSVLPNDISIKDAAEVSLDFSARYSAKQKTYKYLIYNHKFRPAILCNYVYHFPYELDLVSMQKSCEYFIGEYDFSSFCSSGSETNSKVRRIFDCYLTFENDCIAIYITANGFLYNMARIIAGTILDVGVGRFKPTDIPLIIESKDRTKAGKTLPPWGLYLVDVVY.

Asp52 serves as the catalytic Nucleophile. Tyr110 contributes to the substrate binding site.

It belongs to the tRNA pseudouridine synthase TruA family. Homodimer.

It carries out the reaction uridine(38/39/40) in tRNA = pseudouridine(38/39/40) in tRNA. Functionally, formation of pseudouridine at positions 38, 39 and 40 in the anticodon stem and loop of transfer RNAs. The sequence is that of tRNA pseudouridine synthase A from Caldicellulosiruptor saccharolyticus (strain ATCC 43494 / DSM 8903 / Tp8T 6331).